The sequence spans 255 residues: Uridylate kinase (255 aa).

The interval 1–21 (MSAAAAGRGERLNHAGNPGHR) is disordered. Residue 30–33 (KLGG) participates in ATP binding. Residue G71 participates in UMP binding. ATP contacts are provided by G72 and R76. Residues D91 and 152–159 (MGLPYFST) each bind UMP. ATP contacts are provided by F185 and D188.

This sequence belongs to the UMP kinase family. As to quaternary structure, homohexamer.

Its subcellular location is the cytoplasm. It carries out the reaction UMP + ATP = UDP + ADP. It functions in the pathway pyrimidine metabolism; CTP biosynthesis via de novo pathway; UDP from UMP (UMPK route): step 1/1. Its activity is regulated as follows. Inhibited by UTP. Its function is as follows. Catalyzes the reversible phosphorylation of UMP to UDP. The chain is Uridylate kinase from Mycobacterium leprae (strain TN).